A 428-amino-acid chain; its full sequence is Phosphomethylpyrimidine synthase 2 (428 aa).

Substrate contacts are provided by residues Met94, Tyr123, His162, 184–186 (SRG), 225–228 (NGMR), and Glu264. Zn(2+) is bound at residue His268. Position 291 (Tyr291) interacts with substrate. His332 contributes to the Zn(2+) binding site. [4Fe-4S] cluster contacts are provided by Cys408, Cys411, and Cys415.

This sequence belongs to the ThiC family. It depends on [4Fe-4S] cluster as a cofactor.

The enzyme catalyses 5-amino-1-(5-phospho-beta-D-ribosyl)imidazole + S-adenosyl-L-methionine = 4-amino-2-methyl-5-(phosphooxymethyl)pyrimidine + CO + 5'-deoxyadenosine + formate + L-methionine + 3 H(+). The protein operates within cofactor biosynthesis; thiamine diphosphate biosynthesis. Functionally, catalyzes the synthesis of the hydroxymethylpyrimidine phosphate (HMP-P) moiety of thiamine from aminoimidazole ribotide (AIR) in a radical S-adenosyl-L-methionine (SAM)-dependent reaction. The protein is Phosphomethylpyrimidine synthase 2 of Methanosarcina mazei (strain ATCC BAA-159 / DSM 3647 / Goe1 / Go1 / JCM 11833 / OCM 88) (Methanosarcina frisia).